The primary structure comprises 214 residues: Adenylate kinase (214 aa).

Residue 10-15 (GAGKGT) coordinates ATP. Residues 30-59 (STGDMLRAAIKEGTPLGLEAKKVMDAGQLI) form an NMP region. AMP contacts are provided by residues Thr-31, Arg-36, 57 to 59 (QLI), 85 to 88 (GFPR), and Gln-92. The LID stretch occupies residues 122-159 (GRRVHPGSGRVYHVVYNPPKVADKDNETGEELIIRADD). ATP is bound by residues Arg-123 and 132–133 (VY). The AMP site is built by Arg-156 and Arg-167. Gln-200 lines the ATP pocket.

The protein belongs to the adenylate kinase family. Monomer.

The protein resides in the cytoplasm. It carries out the reaction AMP + ATP = 2 ADP. It participates in purine metabolism; AMP biosynthesis via salvage pathway; AMP from ADP: step 1/1. In terms of biological role, catalyzes the reversible transfer of the terminal phosphate group between ATP and AMP. Plays an important role in cellular energy homeostasis and in adenine nucleotide metabolism. This Pseudoalteromonas translucida (strain TAC 125) protein is Adenylate kinase.